A 132-amino-acid chain; its full sequence is Small ribosomal subunit protein uS8 (132 aa).

Belongs to the universal ribosomal protein uS8 family. Part of the 30S ribosomal subunit. Contacts proteins S5 and S12.

One of the primary rRNA binding proteins, it binds directly to 16S rRNA central domain where it helps coordinate assembly of the platform of the 30S subunit. This is Small ribosomal subunit protein uS8 from Francisella philomiragia subsp. philomiragia (strain ATCC 25017 / CCUG 19701 / FSC 153 / O#319-036).